The sequence spans 310 residues: p-hydroxybenzoic acid efflux pump subunit AaeA (310 aa).

The helical transmembrane segment at 12 to 32 (AITLVLVILAFIAIFRAWVYY) threads the bilayer.

This sequence belongs to the membrane fusion protein (MFP) (TC 8.A.1) family.

The protein resides in the cell inner membrane. In terms of biological role, forms an efflux pump with AaeB. The protein is p-hydroxybenzoic acid efflux pump subunit AaeA of Salmonella gallinarum (strain 287/91 / NCTC 13346).